A 72-amino-acid chain; its full sequence is Keratin-associated protein 19-5 (72 aa).

The protein belongs to the KRTAP type 19 family. Interacts with hair keratins.

Functionally, in the hair cortex, hair keratin intermediate filaments are embedded in an interfilamentous matrix, consisting of hair keratin-associated proteins (KRTAP), which are essential for the formation of a rigid and resistant hair shaft through their extensive disulfide bond cross-linking with abundant cysteine residues of hair keratins. The matrix proteins include the high-sulfur and high-glycine-tyrosine keratins. This chain is Keratin-associated protein 19-5 (KRTAP19-5), found in Homo sapiens (Human).